Reading from the N-terminus, the 94-residue chain is Acylphosphatase (94 aa).

Positions 7–94 (AVRVRISGRV…NMPRDFRITG (88 aa)) constitute an Acylphosphatase-like domain. Residues Arg-22 and Asn-40 contribute to the active site.

The protein belongs to the acylphosphatase family.

The enzyme catalyses an acyl phosphate + H2O = a carboxylate + phosphate + H(+). The protein is Acylphosphatase (acyP) of Rhizobium etli (strain ATCC 51251 / DSM 11541 / JCM 21823 / NBRC 15573 / CFN 42).